The sequence spans 188 residues: MDAETLLLETEESMLKAVDFAKQEFSGVRTGKASPGLVENLDVHVSSYGSVMKLKGLAVISTPEPRLILIQPFDPSTVHDIGRAINESKLNLNPLVEGRSIRLPIPALTEERRKDLVKLVKSQAEEARVRVRGARKAAMDSAKKLKAENIVTEDGQRDLETQIQKLTDKYVKEIDELVAVKEKDIMTI.

This sequence belongs to the RRF family.

The protein resides in the cytoplasm. In terms of biological role, responsible for the release of ribosomes from messenger RNA at the termination of protein biosynthesis. May increase the efficiency of translation by recycling ribosomes from one round of translation to another. The sequence is that of Ribosome-recycling factor from Akkermansia muciniphila (strain ATCC BAA-835 / DSM 22959 / JCM 33894 / BCRC 81048 / CCUG 64013 / CIP 107961 / Muc).